A 288-amino-acid polypeptide reads, in one-letter code: Zinc finger protein ZAT9 (288 aa).

The segment at 4 to 26 adopts a C2H2-type 1 zinc-finger fold; the sequence is YKCRVCFKSFVNGKALGGHMRSH. Disordered regions lie at residues 20 to 82, 101 to 123, and 189 to 210; these read GGHM…LTRK, SQLG…DTTT, and GGHR…QRSE. A compositionally biased stretch (polar residues) spans 37 to 52; it reads PSQLSYETESDVSSSD. C2H2-type zinc fingers lie at residues 173–195 and 224–246; these read YKCE…RASH and HECP…KRSH.

Its subcellular location is the nucleus. Functionally, probable transcription factor that may be involved in stress responses. This chain is Zinc finger protein ZAT9 (ZAT9), found in Arabidopsis thaliana (Mouse-ear cress).